Reading from the N-terminus, the 551-residue chain is MDELFPLIFPAEPAQASGPYVEIIEQPKQRGMRFRYKCEGRSAGSIPGERSTDTTKTHPTIKINGYTGPGTVRISLVTKDPPHRPHPHELVGKDCRDGFYEAELCPDRCIHSFQNLGIQCVKKRDLEQAISQRIQTNNNPFQVPIEEQRGDYDLNAVRLCFQVTVRDPSGRPLRLPPVLSHPIFDNRAPNTAELKICRVNRNSGSCLGGDEIFLLCDKVQKEDIEVYFTGPGWEARGSFSQADVHRQVAIVFRTPPYADPSLQAPVRVSMQLRRPSDRELSEPMEFQYLPDTDDRHRIEEKRKRTYETFKSIMKKSPFSGPTDPRPPPRRIAVPSRSSASVPKPAPQPYPFTSSLSTINYDEFPTMVFPSGQISQASALAPAPPQVLPQAPAPAPAPAMVSALAQAPAPVPVLAPGPPQAVAPPAPKPTQAGEGTLSEALLQLQFDDEDLGALLGNSTDPAVFTDLASVDNSEFQQLLNQGIPVAPHTTEPMLMEYPEAITRLVTGAQRPPDPAPAPLGAPGLPNGLLSGDEDFSSIADMDFSALLSQISS.

Met1 carries the post-translational modification N-acetylmethionine. Positions 19 to 306 constitute an RHD domain; that stretch reads PYVEIIEQPK…RIEEKRKRTY (288 aa). A Glycyl lysine isopeptide (Lys-Gly) (interchain with G-Cter in SUMO3) cross-link involves residue Lys37. At Cys38 the chain carries Cysteine persulfide; alternate. Position 38 is an S-nitrosocysteine; alternate (Cys38). Ser75 bears the (Microbial infection) Phosphoserine mark. 2 positions are modified to N6-acetyllysine; by PCAF and EP300; alternate: Lys122 and Lys123. Glycyl lysine isopeptide (Lys-Gly) (interchain with G-Cter in SUMO3); alternate cross-links involve residues Lys122 and Lys123. 2 positions are modified to N6-acetyllysine: Lys218 and Lys221. Thr254 carries the phosphothreonine modification. Position 276 is a phosphoserine; by RPS6KA4 and RPS6KA5 (Ser276). Residue Ser281 is modified to Phosphoserine. The Nuclear localization signal motif lies at 301–304; sequence KRKR. Positions 309-348 are disordered; that stretch reads FKSIMKKSPFSGPTDPRPPPRRIAVPSRSSASVPKPAPQP. N6-acetyllysine; alternate is present on Lys310. An N6-methyllysine; by SETD6; alternate modification is found at Lys310. Residue Ser311 is modified to Phosphoserine; by PKC/PRKCZ. Transcriptional activation domain regions lie at residues 342–389 and 415–476; these read PKPA…VLPQ and PGPP…EFQQ. Thr435 is modified (phosphothreonine). The residue at position 468 (Ser468) is a Phosphoserine; by IKKB and IKKE. Thr505 carries the post-translational modification Phosphothreonine; by CHEK1. Residues 506–530 are disordered; sequence GAQRPPDPAPAPLGAPGLPNGLLSG. The span at 519-528 shows a compositional bias: low complexity; the sequence is GAPGLPNGLL. Positions 520-551 are transcriptional activation domain 2; the sequence is APGLPNGLLSGDEDFSSIADMDFSALLSQISS. Ser529 is subject to Phosphoserine; by CK2. Ser536 is modified (phosphoserine; by IKKB). Positions 536–544 match the 9aaTAD motif; the sequence is SIADMDFSA.

In terms of assembly, component of the NF-kappa-B p65-p50 complex. Component of the NF-kappa-B p65-c-Rel complex. Homodimer; component of the NF-kappa-B p65-p65 complex. Component of the NF-kappa-B p65-p52 complex. May interact with ETHE1. Binds TLE5 and TLE1. Interacts with TP53BP2. Binds to and is phosphorylated by the activated form of either RPS6KA4 or RPS6KA5. Interacts with ING4 and this interaction may be indirect. Interacts with CARM1, USP48 and UNC5CL. Interacts with IRAK1BP1. Interacts with NFKBID. Interacts with NFKBIA. Interacts with GSK3B. Interacts with NFKBIB. Interacts with NFKBIE. Interacts with NFKBIZ. Interacts with EHMT1 (via ANK repeats). Part of a 70-90 kDa complex at least consisting of CHUK, IKBKB, NFKBIA, RELA, ELP1 and MAP3K14. Interacts with HDAC3; HDAC3 mediates the deacetylation of RELA. Interacts with HDAC1; the interaction requires non-phosphorylated RELA. Interacts with CBP; the interaction requires phosphorylated RELA. Interacts (phosphorylated at 'Thr-254') with PIN1; the interaction inhibits p65 binding to NFKBIA. Interacts with SOCS1. Interacts with UXT. Interacts with MTDH and PHF11. Interacts with ARRB2. Interacts with NFKBIA (when phosphorylated), the interaction is direct; phosphorylated NFKBIA is part of a SCF(BTRC)-like complex lacking CUL1. Interacts with RNF25. Interacts (via C-terminus) with DDX1. Interacts with UFL1 and COMMD1. Interacts with BRMS1; this promotes deacetylation of 'Lys-310'. Interacts with NOTCH2. Directly interacts with MEN1; this interaction represses NFKB-mediated transactivation. Interacts with AKIP1, which promotes the phosphorylation and nuclear retention of RELA. Interacts (via the RHD) with GFI1; the interaction, after bacterial lipopolysaccharide (LPS) stimulation, inhibits the transcriptional activity by interfering with the DNA-binding activity to target gene promoter DNA. Interacts (when acetylated at Lys-310) with BRD4; leading to activation of the NF-kappa-B pathway. Interacts with MEFV. Interacts with CLOCK. Interacts (via N-terminus) with CPEN1; this interaction induces proteolytic cleavage of p65/RELA subunit and inhibition of NF-kappa-B transcriptional activity. Interacts with FOXP3. Interacts with CDK5RAP3; stimulates the interaction of RELA with HDAC1, HDAC2 and HDAC3 thereby inhibiting NF-kappa-B transcriptional activity. Interacts with DHX9; this interaction is direct and activates NF-kappa-B-mediated transcription. Interacts with LRRC25. Interacts with TBX21. Interacts with KAT2A. Interacts with ZBTB7A; involved in the control by RELA of the accessibility of target gene promoters. Directly interacts with DDX3X; this interaction may trap RELA in the cytoplasm, impairing nuclear relocalization upon TNF activating signals. Interacts with PHF2. Interacts with MKRN2; the interaction leads to its polyubiquitination and proteasome-dependent degradation. Interacts with ECSIT. Interacts with RAB28; the interaction contributes to RELA transport from cytoplasm to nucleus. (Microbial infection) Interacts with human respiratory syncytial virus (HRSV) protein M2-1. As to quaternary structure, (Microbial infection) Interacts with molluscum contagiosum virus MC132. In terms of assembly, (Microbial infection) Interacts with herpes virus 8 virus protein LANA1. (Microbial infection) Interacts with human cytomegalovirus protein UL44; this interaction prevents NF-kappa-B binding to its promoters. Ubiquitinated by RNF182, leading to its proteasomal degradation. Degradation is required for termination of NF-kappa-B response. Polyubiquitinated via 'Lys-29'-linked ubiquitin; leading to lysosomal degradation. In terms of processing, monomethylated at Lys-310 by SETD6. Monomethylation at Lys-310 is recognized by the ANK repeats of EHMT1 and promotes the formation of repressed chromatin at target genes, leading to down-regulation of NF-kappa-B transcription factor activity. Phosphorylation at Ser-311 disrupts the interaction with EHMT1 without preventing monomethylation at Lys-310 and relieves the repression of target genes. Post-translationally, phosphorylation at Ser-311 disrupts the interaction with EHMT1 and promotes transcription factor activity. Phosphorylation on Ser-536 stimulates acetylation on Lys-310 and interaction with CBP; the phosphorylated and acetylated forms show enhanced transcriptional activity. Phosphorylation at Ser-276 by RPS6KA4 and RPS6KA5 promotes its transactivation and transcriptional activities. Phosphorylation at Ser-75 by herpes simplex virus 1/HHV-1 inhibits NF-kappa-B activation. In terms of processing, reversibly acetylated; the acetylation seems to be mediated by CBP, the deacetylation by HDAC3 and SIRT2. Acetylation at Lys-122 enhances DNA binding and impairs association with NFKBIA. Acetylation at Lys-310 is required for full transcriptional activity in the absence of effects on DNA binding and NFKBIA association. Acetylation at Lys-310 promotes interaction with BRD4. Acetylation can also lower DNA-binding and results in nuclear export. Interaction with BRMS1 promotes deacetylation of Lys-310. Lys-310 is deacetylated by SIRT2. Post-translationally, S-nitrosylation of Cys-38 inactivates the enzyme activity. Sulfhydration at Cys-38 mediates the anti-apoptotic activity by promoting the interaction with RPS3 and activating the transcription factor activity. In terms of processing, sumoylation by PIAS3 negatively regulates DNA-bound activated NF-kappa-B. Post-translationally, proteolytically cleaved within a conserved N-terminus region required for base-specific contact with DNA in a CPEN1-mediated manner, and hence inhibits NF-kappa-B transcriptional activity.

It is found in the nucleus. The protein localises to the cytoplasm. Its function is as follows. NF-kappa-B is a pleiotropic transcription factor present in almost all cell types and is the endpoint of a series of signal transduction events that are initiated by a vast array of stimuli related to many biological processes such as inflammation, immunity, differentiation, cell growth, tumorigenesis and apoptosis. NF-kappa-B is a homo- or heterodimeric complex formed by the Rel-like domain-containing proteins RELA/p65, RELB, NFKB1/p105, NFKB1/p50, REL and NFKB2/p52. The heterodimeric RELA-NFKB1 complex appears to be most abundant one. The dimers bind at kappa-B sites in the DNA of their target genes and the individual dimers have distinct preferences for different kappa-B sites that they can bind with distinguishable affinity and specificity. Different dimer combinations act as transcriptional activators or repressors, respectively. The NF-kappa-B heterodimeric RELA-NFKB1 and RELA-REL complexes, for instance, function as transcriptional activators. NF-kappa-B is controlled by various mechanisms of post-translational modification and subcellular compartmentalization as well as by interactions with other cofactors or corepressors. NF-kappa-B complexes are held in the cytoplasm in an inactive state complexed with members of the NF-kappa-B inhibitor (I-kappa-B) family. In a conventional activation pathway, I-kappa-B is phosphorylated by I-kappa-B kinases (IKKs) in response to different activators, subsequently degraded thus liberating the active NF-kappa-B complex which translocates to the nucleus. The inhibitory effect of I-kappa-B on NF-kappa-B through retention in the cytoplasm is exerted primarily through the interaction with RELA. RELA shows a weak DNA-binding site which could contribute directly to DNA binding in the NF-kappa-B complex. Besides its activity as a direct transcriptional activator, it is also able to modulate promoters accessibility to transcription factors and thereby indirectly regulate gene expression. Associates with chromatin at the NF-kappa-B promoter region via association with DDX1. Essential for cytokine gene expression in T-cells. The NF-kappa-B homodimeric RELA-RELA complex appears to be involved in invasin-mediated activation of IL-8 expression. Key transcription factor regulating the IFN response during SARS-CoV-2 infection. In Homo sapiens (Human), this protein is Transcription factor p65 (RELA).